The primary structure comprises 307 residues: Myeloid-associated differentiation marker-like protein 2 (307 aa).

2 consecutive MARVEL domains span residues 17-154 (AVTS…ARPG) and 159-303 (YMAT…RIRF). 7 helical membrane-spanning segments follow: residues 53–73 (FCMA…ACEF), 90–110 (AFAM…PLYF), 129–149 (LAAS…VALT), 163–183 (VSGL…GALV), 198–218 (VAVY…SVMG), 232–252 (VVYT…WPVF), and 278–298 (LVVA…LAYS).

This sequence belongs to the MAL family.

The protein resides in the membrane. This is Myeloid-associated differentiation marker-like protein 2 (Myadml2) from Rattus norvegicus (Rat).